The following is a 108-amino-acid chain: UPF0060 membrane protein YnfA (108 aa).

Topologically, residues 1 to 5 are periplasmic; sequence MFKTT. Residues 6–26 traverse the membrane as a helical segment; that stretch reads LLFFITALCEIIGCFLPWLWL. The Cytoplasmic segment spans residues 27 to 30; sequence KRNG. The helical transmembrane segment at 31–51 threads the bilayer; sequence SIWLLLPAGVSLAFFVWLLTL. Topologically, residues 52-60 are periplasmic; the sequence is HPAASGRVY. A helical transmembrane segment spans residues 61–81; that stretch reads AAYGGVYVCTALLWLRFIDGV. At 82 to 84 the chain is on the cytoplasmic side; the sequence is KLS. The helical transmembrane segment at 85 to 105 threads the bilayer; sequence LYDWSGALIALCGMLIIVAGW. The Periplasmic portion of the chain corresponds to 106-108; that stretch reads GRA.

Belongs to the UPF0060 family.

It is found in the cell inner membrane. This is UPF0060 membrane protein YnfA from Escherichia fergusonii (strain ATCC 35469 / DSM 13698 / CCUG 18766 / IAM 14443 / JCM 21226 / LMG 7866 / NBRC 102419 / NCTC 12128 / CDC 0568-73).